The primary structure comprises 416 residues: Phakinin (416 aa).

The interval 1–48 is disordered; it reads MSKRRVAADLPSGTNSSMPVQRHRVSSLRGTHSPSSLDSPPASRTSAV. An N-acetylserine modification is found at serine 2. A head region spans residues 2 to 115; the sequence is SKRRVAADLP…HTTVEDLGGC (114 aa). Serine 27, serine 33, serine 36, and serine 91 each carry phosphoserine. Polar residues predominate over residues 28–48; that stretch reads LRGTHSPSSLDSPPASRTSAV. An IF rod domain is found at 105 to 416; that stretch reads DHTTVEDLGG…HALLDREENN (312 aa). Coiled-coil stretches lie at residues 116–146, 170–249, and 308–402; these read LVEY…SKAK, LENA…VKVL, and QTQE…LQKD. The tract at residues 397-416 is tail; sequence SQLQKDVASYHALLDREENN.

This sequence belongs to the intermediate filament family. Part of a complex required for lens intermediate filament formation composed of BFSP1, BFSP2 and CRYAA. Found in a complex composed of PPL (via C-terminal linker domain), BFSP1 and BFSP2 in the retinal lens. Within the complex interacts with PPL (via C-terminal linker domain) and with BFSP1. Identified in a complex that contains VIM, EZR, AHNAK, BFSP1, BFSP2, ANK2, PLEC, PRX and spectrin. Interacts with LGSN. Interacts with VIM. In terms of tissue distribution, detected in retina lens fiber cells (at protein level). Also expressed in the lens epithelium, abundantly expressed in the anterior and anterolateral epithelium, less frequently expressed nearer the lens coronal equator (at protein level).

The protein resides in the cell membrane. The protein localises to the cytoplasm. It is found in the cytoskeleton. It localises to the cell cortex. In terms of biological role, required for the correct formation of lens intermediate filaments as part of a complex composed of BFSP1, BFSP2 and CRYAA. Plays a role in maintenance of retinal lens optical clarity. This is Phakinin (Bfsp2) from Mus musculus (Mouse).